We begin with the raw amino-acid sequence, 465 residues long: ATP-dependent rRNA helicase rrp3 (465 aa).

A disordered region spans residues 1–46 (MSALKKRKITEKQPETNSDSEAESVSSRGSAKDETQTSGEEPAPAK). The segment covering 15–29 (ETNSDSEAESVSSRG) has biased composition (polar residues). The Q motif motif lies at 46-74 (KSFKELGIIDQLCEACENMGYKAPTPIQS). In terms of domain architecture, Helicase ATP-binding spans 77–248 (IPLALEGRDV…RASLSNPVRV (172 aa)). 90–97 (AETGSGKT) is an ATP binding site. Positions 196–199 (DEAD) match the DEAD box motif. Residues 275-419 (YLVYLLNEFA…EYQVEKDEVM (145 aa)) enclose the Helicase C-terminal domain. The tract at residues 436-465 (MKSFDEKKGARGKKFGKGKRSRDDMDQEEG) is disordered. The span at 445-455 (ARGKKFGKGKR) shows a compositional bias: basic residues.

This sequence belongs to the DEAD box helicase family. DDX47/RRP3 subfamily. Interacts with the SSU processome.

The protein localises to the nucleus. It catalyses the reaction ATP + H2O = ADP + phosphate + H(+). Functionally, ATP-dependent rRNA helicase required for pre-ribosomal RNA processing. Involved in the maturation of the 35S-pre-rRNA and to its cleavage to mature 18S rRNA. The protein is ATP-dependent rRNA helicase rrp3 of Emericella nidulans (strain FGSC A4 / ATCC 38163 / CBS 112.46 / NRRL 194 / M139) (Aspergillus nidulans).